The following is a 333-amino-acid chain: Tetraacyldisaccharide 4'-kinase (333 aa).

55 to 62 (TAGGNGKT) contributes to the ATP binding site.

This sequence belongs to the LpxK family.

It catalyses the reaction a lipid A disaccharide + ATP = a lipid IVA + ADP + H(+). Its pathway is glycolipid biosynthesis; lipid IV(A) biosynthesis; lipid IV(A) from (3R)-3-hydroxytetradecanoyl-[acyl-carrier-protein] and UDP-N-acetyl-alpha-D-glucosamine: step 6/6. Its function is as follows. Transfers the gamma-phosphate of ATP to the 4'-position of a tetraacyldisaccharide 1-phosphate intermediate (termed DS-1-P) to form tetraacyldisaccharide 1,4'-bis-phosphate (lipid IVA). The sequence is that of Tetraacyldisaccharide 4'-kinase from Pectobacterium carotovorum subsp. carotovorum (strain PC1).